A 339-amino-acid chain; its full sequence is UDP-glucose 4-epimerase (339 aa).

NAD(+) contacts are provided by residues 12-13, 32-37, 59-60, 81-85, Asn100, Ser125, Tyr150, Lys154, and Phe179; these read FI, DNLCNS, DI, and FAGLK. 2 residues coordinate substrate: Ser125 and Tyr150. The Proton acceptor role is filled by Tyr150. Substrate is bound by residues Asn180, 200 to 201, 217 to 219, Arg232, and 293 to 296; these read NL, AVF, and RAGD.

This sequence belongs to the NAD(P)-dependent epimerase/dehydratase family. Homodimer. NAD(+) serves as cofactor.

The catalysed reaction is UDP-alpha-D-glucose = UDP-alpha-D-galactose. It functions in the pathway carbohydrate metabolism; galactose metabolism. Involved in the metabolism of galactose. Plays an essential role in the incorporation of galactose into meningococcal lipopolysaccharide surface molecules, which are important for pathogenesis. Catalyzes the conversion of UDP-galactose (UDP-Gal) to UDP-glucose (UDP-Glc) through a mechanism involving the transient reduction of NAD. This Neisseria meningitidis serogroup C protein is UDP-glucose 4-epimerase (galE).